Here is a 447-residue protein sequence, read N- to C-terminus: Exodeoxyribonuclease 7 large subunit (447 aa).

This sequence belongs to the XseA family. As to quaternary structure, heterooligomer composed of large and small subunits.

The protein localises to the cytoplasm. It catalyses the reaction Exonucleolytic cleavage in either 5'- to 3'- or 3'- to 5'-direction to yield nucleoside 5'-phosphates.. Its function is as follows. Bidirectionally degrades single-stranded DNA into large acid-insoluble oligonucleotides, which are then degraded further into small acid-soluble oligonucleotides. The chain is Exodeoxyribonuclease 7 large subunit from Geobacter sulfurreducens (strain ATCC 51573 / DSM 12127 / PCA).